Here is a 1123-residue protein sequence, read N- to C-terminus: uncharacterized protein (1123 aa).

This is an uncharacterized protein from Ictaluridae (bullhead catfishes).